Reading from the N-terminus, the 341-residue chain is Phosphoribosylformylglycinamidine cyclo-ligase (341 aa).

The protein belongs to the AIR synthase family.

The protein localises to the cytoplasm. The enzyme catalyses 2-formamido-N(1)-(5-O-phospho-beta-D-ribosyl)acetamidine + ATP = 5-amino-1-(5-phospho-beta-D-ribosyl)imidazole + ADP + phosphate + H(+). It participates in purine metabolism; IMP biosynthesis via de novo pathway; 5-amino-1-(5-phospho-D-ribosyl)imidazole from N(2)-formyl-N(1)-(5-phospho-D-ribosyl)glycinamide: step 2/2. In Xanthomonas campestris pv. campestris (strain B100), this protein is Phosphoribosylformylglycinamidine cyclo-ligase.